The sequence spans 708 residues: Ion-translocating oxidoreductase complex subunit C (708 aa).

2 4Fe-4S ferredoxin-type domains span residues 369 to 397 (GEPQ…QQLY) and 407 to 436 (KATT…VQYF). Residues Cys-377, Cys-380, Cys-383, Cys-387, Cys-416, Cys-419, Cys-422, and Cys-426 each coordinate [4Fe-4S] cluster. The interval 630–682 (AKARKLEQQQANAEPEEQIDPRKAAVEAAIARAKARKLEQQQANAEPEEQIDP) is disordered.

Belongs to the 4Fe4S bacterial-type ferredoxin family. RnfC subfamily. As to quaternary structure, the complex is composed of six subunits: RsxA, RsxB, RsxC, RsxD, RsxE and RsxG. [4Fe-4S] cluster is required as a cofactor.

The protein resides in the cell inner membrane. In terms of biological role, part of a membrane-bound complex that couples electron transfer with translocation of ions across the membrane. Required to maintain the reduced state of SoxR. The polypeptide is Ion-translocating oxidoreductase complex subunit C (Escherichia coli O1:K1 / APEC).